The following is a 427-amino-acid chain: 3-deoxy-D-manno-octulosonic acid transferase (427 aa).

Residues 4-24 (FFYTSLLLICQPLILCFIGLL) traverse the membrane as a helical; Signal-anchor segment. The Proton acceptor role is filled by glutamate 62. Residues 270 to 271 (PR), 311 to 313 (MGE), and 337 to 340 (NPLE) each bind CMP.

This sequence belongs to the glycosyltransferase group 1 family. Glycosyltransferase 30 subfamily.

The protein localises to the cell inner membrane. It catalyses the reaction lipid IVA (E. coli) + CMP-3-deoxy-beta-D-manno-octulosonate = alpha-Kdo-(2-&gt;6)-lipid IVA (E. coli) + CMP + H(+). Its pathway is bacterial outer membrane biogenesis; LPS core biosynthesis. Involved in lipopolysaccharide (LPS) biosynthesis. Catalyzes the transfer of a single 3-deoxy-D-manno-octulosonate (Kdo) residue from CMP-Kdo to lipid IV(A), the tetraacyldisaccharide-1,4'-bisphosphate precursor of lipid A. Is strictly monofunctional, i.e. is capable of adding only a single Kdo residue to the acceptor lipid. In Haemophilus influenzae (strain ATCC 51907 / DSM 11121 / KW20 / Rd), this protein is 3-deoxy-D-manno-octulosonic acid transferase (waaA).